The primary structure comprises 104 residues: MGLFSFDGGKKESQPPNTRSQRKLCWESRDAFFQCLDKADILDAMDPKNSKSIKSHCKVENEKFEENCAHSWIKYFKEKRVIDFKREQTIKRIEQEAKQRERNQ.

A disordered region spans residues 1–22 (MGLFSFDGGKKESQPPNTRSQR). The CHCH domain occupies 22-76 (RKLCWESRDAFFQCLDKADILDAMDPKNSKSIKSHCKVENEKFEENCAHSWIKYF). The short motif at 25 to 35 (CWESRDAFFQC) is the Cx9C motif element. Disulfide bonds link cysteine 25/cysteine 68 and cysteine 35/cysteine 57. A Cx10C motif motif is present at residues 57–68 (CKVENEKFEENC).

The protein belongs to the cytochrome c oxidase subunit 6B family. In terms of assembly, interacts with COX2.

It localises to the cytoplasm. The protein resides in the nucleus. It is found in the mitochondrion intermembrane space. Its function is as follows. Involved in the maturation of the mitochondrial respiratory chain complex IV subunit MT-CO2/COX2. Thereby, may regulate early steps of complex IV assembly. Mitochondrial respiratory chain complex IV or cytochrome c oxidase is the component of the respiratory chain that catalyzes the transfer of electrons from intermembrane space cytochrome c to molecular oxygen in the matrix and as a consequence contributes to the proton gradient involved in mitochondrial ATP synthesis. May also be required for efficient formation of respiratory supercomplexes comprised of complexes III and IV. This is Cytochrome c oxidase assembly factor 6 from Saccharomyces cerevisiae (strain ATCC 204508 / S288c) (Baker's yeast).